A 72-amino-acid chain; its full sequence is Translation initiation factor IF-1 (72 aa).

The region spanning 1 to 72 (MAKDDVIEVE…TRGRITYRFK (72 aa)) is the S1-like domain.

This sequence belongs to the IF-1 family. In terms of assembly, component of the 30S ribosomal translation pre-initiation complex which assembles on the 30S ribosome in the order IF-2 and IF-3, IF-1 and N-formylmethionyl-tRNA(fMet); mRNA recruitment can occur at any time during PIC assembly.

It is found in the cytoplasm. One of the essential components for the initiation of protein synthesis. Stabilizes the binding of IF-2 and IF-3 on the 30S subunit to which N-formylmethionyl-tRNA(fMet) subsequently binds. Helps modulate mRNA selection, yielding the 30S pre-initiation complex (PIC). Upon addition of the 50S ribosomal subunit IF-1, IF-2 and IF-3 are released leaving the mature 70S translation initiation complex. The protein is Translation initiation factor IF-1 of Streptococcus gordonii (strain Challis / ATCC 35105 / BCRC 15272 / CH1 / DL1 / V288).